A 1728-amino-acid polypeptide reads, in one-letter code: Mitochondrial 3' processome subunit 1 (1728 aa).

Residues 1-117 (MRRLILSQTL…AGKMTGSSRF (117 aa)) constitute a mitochondrion transit peptide. Disordered regions lie at residues 45 to 71 (HRKREGRMYGKPLRPVSDGENGASGDG), 88 to 156 (ESPV…IGQQ), and 829 to 863 (GCNRDGGPSRPNTATDSANKKVVSGKQTDNLPKGT).

As to quaternary structure, component of the mitochondrial 3' processome (MPsome) complex composed at least of terminal uridylyltransferase KRET1/TUT1, 3'-5' exonuclease DSS1, MPSS1, MPSS2 and MPSS3. Within the complex, interacts with KRET1.

Its subcellular location is the mitochondrion. Functionally, as part of the mitochondrial 3' processome (MPsome), involved in the maturation of guided RNA (gRNA) precursors. This is Mitochondrial 3' processome subunit 1 from Trypanosoma brucei brucei.